The chain runs to 631 residues: Shootin-1 (631 aa).

Residue methionine 1 is modified to N-acetylmethionine. Phosphoserine occurs at positions 3 and 4. A coiled-coil region spans residues 7–353 (EKQLQLITSL…RVNQSENSVP (347 aa)). Serine 101 carries the post-translational modification Phosphoserine; by PAK1. The residue at position 249 (serine 249) is a Phosphoserine. Disordered regions lie at residues 343 to 404 (KRVN…EVTD) and 417 to 508 (IKKG…KSMP). The span at 352 to 369 (VPPPPPPPPPLPPPPPNP) shows a compositional bias: pro residues. The residue at position 375 (serine 375) is a Phosphoserine. Residues 456 to 465 (LNKSTSSRSL) show a composition bias toward polar residues. Phosphoserine is present on serine 473. At threonine 487 the chain carries Phosphothreonine. A compositionally biased stretch (polar residues) spans 490–505 (ADSSSPTGILATSESK). Phosphoserine is present on serine 494. Residue threonine 496 is modified to Phosphothreonine. A phosphoserine mark is found at serine 506 and serine 515. Residues 530 to 631 (FNNPCPLTPE…KTGETDSSNC (102 aa)) form a disordered region. Residue threonine 537 is modified to Phosphothreonine. A compositionally biased stretch (basic and acidic residues) spans 590–602 (PQTKDQAAEKDPT).

Belongs to the shootin family. In terms of assembly, interacts with L1CAM; this interaction occurs at axonal growth cones. Interacts with actin filament retrograde flow; this interaction is enhanced in a netrin-1- and PAK1-dependent manner and promotes F-actin-substrate coupling and concomitant formation of traction forces at axonal growth cones. Interacts with RUFY3. Interacts with PFN2. Interacts (via N-terminus) with KIF20B; this interaction is direct and promotes the association of SHTN1 to microtubules in primary neurons. Associates with microtubule. Post-translationally, phosphorylated on Ser-101 and Ser-249 by PAK1 through a CDC42- and RAC1-dependent signaling pathway, which enhances its association with F-actin retrograde flow in filopodia and lamellipodia of axonal growth cones. Phosphorylation on Ser-101 and Ser-249 is increased by netrin-1. Expressed in hippocampal neurons.

The protein resides in the perikaryon. It localises to the cell projection. It is found in the axon. The protein localises to the growth cone. Its subcellular location is the cytoplasm. The protein resides in the cytoskeleton. It localises to the filopodium. It is found in the lamellipodium. In terms of biological role, involved in the generation of internal asymmetric signals required for neuronal polarization and neurite outgrowth. Mediates netrin-1-induced F-actin-substrate coupling or 'clutch engagement' within the axon growth cone through activation of CDC42, RAC1 and PAK1-dependent signaling pathway, thereby converting the F-actin retrograde flow into traction forces, concomitantly with filopodium extension and axon outgrowth. Plays a role in cytoskeletal organization by regulating the subcellular localization of phosphoinositide 3-kinase (PI3K) activity at the axonal growth cone. Also plays a role in regenerative neurite outgrowth. In the developing cortex, cooperates with KIF20B to promote both the transition from the multipolar to the bipolar stage and the radial migration of cortical neurons from the ventricular zone toward the superficial layer of the neocortex. Involved in the accumulation of phosphatidylinositol 3,4,5-trisphosphate (PIP3) in the growth cone of primary hippocampal neurons. The polypeptide is Shootin-1 (Mus musculus (Mouse)).